Consider the following 1382-residue polypeptide: Hepatocyte growth factor receptor (1382 aa).

The first 24 residues, 1–24, serve as a signal peptide directing secretion; the sequence is MKASAVLAPGILVILFTLVQKSNC. Over 25–933 the chain is Extracellular; the sequence is ECKEALVKSK…VIVQPDQNIT (909 aa). The Sema domain occupies 27–516; the sequence is KEALVKSKMN…TGKKITKIPL (490 aa). A glycan (N-linked (GlcNAc...) asparagine) is linked at N45. Intrachain disulfides connect C95/C101, C98/C160, C133/C141, and C173/C176. N106 carries an N-linked (GlcNAc...) asparagine glycan. N-linked (GlcNAc...) asparagine glycosylation is found at N203 and N359. 2 cysteine pairs are disulfide-bonded: C299–C364 and C386–C398. N-linked (GlcNAc...) asparagine glycans are attached at residues N400 and N406. 4 disulfides stabilise this stretch: C521/C539, C527/C562, C530/C546, and C542/C552. 3 consecutive IPT/TIG domains span residues 564–656, 658–740, and 743–837; these read PTIY…FSYV, PIIT…FSYQ, and PIIY…LIYV. T583 carries an O-linked (Man) threonine glycan. N-linked (GlcNAc...) asparagine glycosylation is found at N608 and N636. 2 O-linked (Man) threonine glycosylation sites follow: T677 and T762. N-linked (GlcNAc...) asparagine glycosylation is found at N786, N880, and N931. A helical transmembrane segment spans residues 934 to 956; the sequence is EFIVGILSISGILLTLLGLLLWW. At 957–1382 the chain is on the cytoplasmic side; sequence KKKKQIKDLG…QDNFDSEGNT (426 aa). Phosphoserine is present on S967. At T978 the chain carries Phosphothreonine. 3 positions are modified to phosphoserine: S991, S998, and S1001. Y1004 bears the Phosphotyrosine mark. The 268-residue stretch at 1079-1346 folds into the Protein kinase domain; that stretch reads VHFNEVIGRG…RISAIFSTFI (268 aa). Residues 1085–1093 and K1111 each bind ATP; that span reads IGRGHFGCV. D1205 functions as the Proton acceptor in the catalytic mechanism. Residues 1213–1382 are interaction with RANBP9; the sequence is LDENFTVKVA…QDNFDSEGNT (170 aa). At Y1231 the chain carries Phosphotyrosine. 2 positions are modified to phosphotyrosine; by autocatalysis: Y1235 and Y1236. T1290 is subject to Phosphothreonine. The tract at residues 1321-1360 is interaction with MUC20; that stretch reads WHPKAELRPSFSELVSRISAIFSTFIGEHYVHVNATYVNI. Phosphotyrosine; by autocatalysis occurs at positions 1350 and 1357. At Y1366 the chain carries Phosphotyrosine.

The protein belongs to the protein kinase superfamily. Tyr protein kinase family. In terms of assembly, heterodimer made of an alpha chain (50 kDa) and a beta chain (145 kDa) which are disulfide linked. Binds PLXNB1. Interacts when phosphorylated with downstream effectors including STAT3, PIK3R1, SRC, PCLG1, GRB2 and GAB1. Interacts with SPSB1, SPSB2 and SPSB4. Interacts with INPP5D/SHIP1. When phosphorylated at Tyr-1357, interacts with INPPL1/SHIP2. Interacts with RANBP9 and RANBP10, as well as SPSB1, SPSB2, SPSB3 and SPSB4. SPSB1 binding occurs in the presence and in the absence of HGF, however HGF treatment has a positive effect on this interaction. Interacts with MUC20; prevents interaction with GRB2 and suppresses hepatocyte growth factor-induced cell proliferation. Interacts with GRB10. Interacts with PTPN1 and PTPN2. Interacts with tensin TNS3. Interacts (when phosphorylated) with tensin TNS4 (via SH2 domain); the interaction increases MET protein stability by inhibiting MET endocytosis and subsequent lysosomal degradation. In terms of processing, autophosphorylated in response to ligand binding on Tyr-1235 and Tyr-1236 in the kinase domain leading to further phosphorylation of Tyr-1350 and Tyr-1357 in the C-terminal multifunctional docking site. Dephosphorylated by PTPRJ at Tyr-1350 and Tyr-1366. Dephosphorylated by PTPN1 and PTPN2. Post-translationally, ubiquitinated. Ubiquitination by CBL regulates the receptor stability and activity through proteasomal degradation. O-mannosylation of IPT/TIG domains by TMEM260 is required for protein maturation. O-mannosylated residues are composed of single mannose glycans that are not elongated or modified.

Its subcellular location is the membrane. The catalysed reaction is L-tyrosyl-[protein] + ATP = O-phospho-L-tyrosyl-[protein] + ADP + H(+). In its inactive state, the C-terminal tail interacts with the catalytic domain and inhibits the kinase activity. Upon ligand binding, the C-terminal tail is displaced and becomes phosphorylated, thus increasing the kinase activity. Functionally, receptor tyrosine kinase that transduces signals from the extracellular matrix into the cytoplasm by binding to hepatocyte growth factor/HGF ligand. Regulates many physiological processes including proliferation, scattering, morphogenesis and survival. Ligand binding at the cell surface induces autophosphorylation of MET on its intracellular domain that provides docking sites for downstream signaling molecules. Following activation by ligand, interacts with the PI3-kinase subunit PIK3R1, PLCG1, SRC, GRB2, STAT3 or the adapter GAB1. Recruitment of these downstream effectors by MET leads to the activation of several signaling cascades including the RAS-ERK, PI3 kinase-AKT, or PLCgamma-PKC. The RAS-ERK activation is associated with the morphogenetic effects while PI3K/AKT coordinates prosurvival effects. During embryonic development, MET signaling plays a role in gastrulation, development and migration of muscles and neuronal precursors, angiogenesis and kidney formation. In adults, participates in wound healing as well as organ regeneration and tissue remodeling. Also promotes differentiation and proliferation of hematopoietic cells. The polypeptide is Hepatocyte growth factor receptor (MET) (Atelerix albiventris (Middle-African hedgehog)).